The chain runs to 126 residues: Protein ApaG (126 aa).

The ApaG domain occupies 2 to 126 (SDPRYQIDVS…FRLAVPGALH (125 aa)).

This chain is Protein ApaG, found in Pseudomonas putida (strain ATCC 700007 / DSM 6899 / JCM 31910 / BCRC 17059 / LMG 24140 / F1).